The primary structure comprises 818 residues: G-type lectin S-receptor-like serine/threonine-protein kinase At1g67520 (818 aa).

A signal peptide spans 1–22 (MCSNGIFVSLLTLSLLLGKSCS). Topologically, residues 23–387 (ETDTLHQGQF…NENKKVAAWH (365 aa)) are extracellular. The Bulb-type lectin domain maps to 24-149 (TDTLHQGQFL…DADGSMKRVL (126 aa)). N-linked (GlcNAc...) asparagine glycans are attached at residues N123, N199, and N337. Residues 290 to 379 (CLAAGYVVRD…PRTIYIRGNE (90 aa)) form the PAN domain. Intrachain disulfides connect C330/C353 and C334/C340. Residues 388 to 408 (IVVATLFLMTPIIWFIIYLVL) traverse the membrane as a helical segment. Topologically, residues 409 to 818 (RKFNVKGRNC…SITITVLEAR (410 aa)) are cytoplasmic. The 290-residue stretch at 496-785 (FSDENKLGEG…ALSLPKEPAF (290 aa)) folds into the Protein kinase domain. ATP contacts are provided by residues 502–510 (LGEGGFGPV) and K524. Phosphoserine is present on S530. The segment at 585–602 (LRKNVLDWTLRFRIMEGI) is caM-binding. The Proton acceptor role is filled by D621. A phosphoserine mark is found at S625 and S638. A Phosphothreonine modification is found at T655. Phosphoserine is present on residues S699 and S807. Phosphothreonine is present on T813.

Belongs to the protein kinase superfamily. Ser/Thr protein kinase family.

It is found in the cell membrane. It catalyses the reaction L-seryl-[protein] + ATP = O-phospho-L-seryl-[protein] + ADP + H(+). The catalysed reaction is L-threonyl-[protein] + ATP = O-phospho-L-threonyl-[protein] + ADP + H(+). This Arabidopsis thaliana (Mouse-ear cress) protein is G-type lectin S-receptor-like serine/threonine-protein kinase At1g67520.